Reading from the N-terminus, the 279-residue chain is Shikimate dehydrogenase (NADP(+)) (279 aa).

Shikimate-binding positions include 17-19 (SLS) and Thr-64. The active-site Proton acceptor is the Lys-68. Asp-80 provides a ligand contact to NADP(+). Shikimate contacts are provided by Asn-89 and Asp-105. NADP(+)-binding positions include 129-133 (GAGGS), 153-158 (NRTAKK), and Leu-221. Tyr-223 provides a ligand contact to shikimate. Position 245 (Gly-245) interacts with NADP(+).

Belongs to the shikimate dehydrogenase family. In terms of assembly, homodimer.

It carries out the reaction shikimate + NADP(+) = 3-dehydroshikimate + NADPH + H(+). The protein operates within metabolic intermediate biosynthesis; chorismate biosynthesis; chorismate from D-erythrose 4-phosphate and phosphoenolpyruvate: step 4/7. Functionally, involved in the biosynthesis of the chorismate, which leads to the biosynthesis of aromatic amino acids. Catalyzes the reversible NADPH linked reduction of 3-dehydroshikimate (DHSA) to yield shikimate (SA). This Idiomarina loihiensis (strain ATCC BAA-735 / DSM 15497 / L2-TR) protein is Shikimate dehydrogenase (NADP(+)).